The chain runs to 407 residues: Argininosuccinate synthase (407 aa).

ATP is bound by residues 16 to 24 and Ala-44; that span reads AYSGGLDTS. L-citrulline-binding residues include Tyr-96 and Ser-101. Gly-126 lines the ATP pocket. Residues Thr-128, Asn-132, and Asp-133 each coordinate L-aspartate. Asn-132 contacts L-citrulline. Positions 136, 185, 194, 270, and 282 each coordinate L-citrulline.

The protein belongs to the argininosuccinate synthase family. Type 1 subfamily. In terms of assembly, homotetramer.

It is found in the cytoplasm. It carries out the reaction L-citrulline + L-aspartate + ATP = 2-(N(omega)-L-arginino)succinate + AMP + diphosphate + H(+). The protein operates within amino-acid biosynthesis; L-arginine biosynthesis; L-arginine from L-ornithine and carbamoyl phosphate: step 2/3. This Shewanella putrefaciens (strain CN-32 / ATCC BAA-453) protein is Argininosuccinate synthase.